The sequence spans 102 residues: Large ribosomal subunit protein bL21 (102 aa).

The protein belongs to the bacterial ribosomal protein bL21 family. As to quaternary structure, part of the 50S ribosomal subunit. Contacts protein L20.

In terms of biological role, this protein binds to 23S rRNA in the presence of protein L20. This Lawsonia intracellularis protein is Large ribosomal subunit protein bL21.